Here is a 325-residue protein sequence, read N- to C-terminus: UPF0285 protein MmarC6_0247 (325 aa).

Belongs to the UPF0285 family.

This is UPF0285 protein MmarC6_0247 from Methanococcus maripaludis (strain C6 / ATCC BAA-1332).